The sequence spans 225 residues: Membrane protein (225 aa).

Over 1–20 the chain is Virion surface; the sequence is MPNETNCTLDFEQSVQLFKE. The chain crosses the membrane as a helical span at residues 21–41; that stretch reads YNLFITAFLLFLTIILQYGYA. The Intravirion portion of the chain corresponds to 42–51; that stretch reads TRTKVIYTLK. A helical transmembrane segment spans residues 52–72; sequence MIVLWCFWPLNIAVGVISCTY. The Virion surface portion of the chain corresponds to 73 to 77; the sequence is PPNTG. Residues 78-98 traverse the membrane as a helical segment; sequence GLVVAIILTVFACLSFVGYWI. Residues 99–225 are Intravirion-facing; sequence QSIRLFKRCR…VATGGSSLYT (127 aa).

It belongs to the gammacoronaviruses M protein family. As to quaternary structure, homomultimer. Interacts with envelope E protein in the budding compartment of the host cell, which is located between endoplasmic reticulum and the Golgi complex. Forms a complex with HE and S proteins. Interacts with nucleocapsid N protein. This interaction probably participates in RNA packaging into the virus.

It is found in the virion membrane. The protein resides in the host Golgi apparatus membrane. Component of the viral envelope that plays a central role in virus morphogenesis and assembly via its interactions with other viral proteins. This is Membrane protein from Avian infectious bronchitis virus (strain Beaudette US) (IBV).